Consider the following 375-residue polypeptide: Putative F-box protein At5g52620 (375 aa).

The region spanning 5-52 (GKSDPIPIDIILDILSRLSTNSIAKFGLASKFCGSILRGQDFIELFLI) is the F-box domain.

The polypeptide is Putative F-box protein At5g52620 (Arabidopsis thaliana (Mouse-ear cress)).